Consider the following 150-residue polypeptide: Lipoprotein signal peptidase (150 aa).

A run of 3 helical transmembrane segments spans residues 5-25 (LSLV…NWVV), 59-79 (QQWF…WFLW), and 83-103 (GQNW…GNFI). Active-site residues include Asp113 and Asp129. Residues 124–144 (IFNIADILLSVGFVVLFIAIL) form a helical membrane-spanning segment.

It belongs to the peptidase A8 family.

It localises to the cell membrane. It catalyses the reaction Release of signal peptides from bacterial membrane prolipoproteins. Hydrolyzes -Xaa-Yaa-Zaa-|-(S,diacylglyceryl)Cys-, in which Xaa is hydrophobic (preferably Leu), and Yaa (Ala or Ser) and Zaa (Gly or Ala) have small, neutral side chains.. It functions in the pathway protein modification; lipoprotein biosynthesis (signal peptide cleavage). This protein specifically catalyzes the removal of signal peptides from prolipoproteins. This chain is Lipoprotein signal peptidase, found in Lactococcus lactis subsp. cremoris (strain MG1363).